Reading from the N-terminus, the 311-residue chain is Phosphoribosylaminoimidazole-succinocarboxamide synthase (311 aa).

The protein belongs to the SAICAR synthetase family.

It catalyses the reaction 5-amino-1-(5-phospho-D-ribosyl)imidazole-4-carboxylate + L-aspartate + ATP = (2S)-2-[5-amino-1-(5-phospho-beta-D-ribosyl)imidazole-4-carboxamido]succinate + ADP + phosphate + 2 H(+). Its pathway is purine metabolism; IMP biosynthesis via de novo pathway; 5-amino-1-(5-phospho-D-ribosyl)imidazole-4-carboxamide from 5-amino-1-(5-phospho-D-ribosyl)imidazole-4-carboxylate: step 1/2. The polypeptide is Phosphoribosylaminoimidazole-succinocarboxamide synthase (Aromatoleum aromaticum (strain DSM 19018 / LMG 30748 / EbN1) (Azoarcus sp. (strain EbN1))).